The primary structure comprises 231 residues: Cutinase 2 (231 aa).

Residues 1 to 16 (MKFFALTTLLAATASA) form the signal peptide. The cysteines at positions 48 and 126 are disulfide-linked. Catalysis depends on Ser137, which acts as the Nucleophile. The cysteines at positions 188 and 195 are disulfide-linked. Asp192 is a catalytic residue. His205 serves as the catalytic Proton donor/acceptor.

It belongs to the cutinase family. The 2 disulfide bonds play a critical role in holding the catalytic residues in juxta-position; reduction of the disulfide bridges results in the complete inactivation of the enzyme.

It is found in the secreted. The enzyme catalyses cutin + H2O = cutin monomers.. In terms of biological role, catalyzes the hydrolysis of complex carboxylic polyesters found in the cell wall of plants. Degrades cutin, a macromolecule that forms the structure of the plant cuticle. Allows pathogenic fungi to penetrate through the cuticular barrier into the host plant during the initial stage of fungal infection. This is Cutinase 2 (CUT2) from Fusarium vanettenii (Neocosmospora pisi).